The sequence spans 211 residues: High frequency lysogenization protein HflD homolog (211 aa).

The protein belongs to the HflD family.

The protein resides in the cytoplasm. The protein localises to the cell membrane. This is High frequency lysogenization protein HflD homolog from Buchnera aphidicola subsp. Acyrthosiphon pisum (strain 5A).